The primary structure comprises 62 residues: Photosystem II reaction center protein Z (62 aa).

2 consecutive transmembrane segments (helical) span residues 8 to 28 (AVFALIATSSILLISVPVVFS) and 41 to 61 (FSGTSLWIGLVFLVGILNSLI).

This sequence belongs to the PsbZ family. In terms of assembly, PSII is composed of 1 copy each of membrane proteins PsbA, PsbB, PsbC, PsbD, PsbE, PsbF, PsbH, PsbI, PsbJ, PsbK, PsbL, PsbM, PsbT, PsbY, PsbZ, Psb30/Ycf12, at least 3 peripheral proteins of the oxygen-evolving complex and a large number of cofactors. It forms dimeric complexes.

It is found in the plastid. It localises to the chloroplast thylakoid membrane. In terms of biological role, may control the interaction of photosystem II (PSII) cores with the light-harvesting antenna, regulates electron flow through the 2 photosystem reaction centers. PSII is a light-driven water plastoquinone oxidoreductase, using light energy to abstract electrons from H(2)O, generating a proton gradient subsequently used for ATP formation. In Populus alba (White poplar), this protein is Photosystem II reaction center protein Z.